A 253-amino-acid polypeptide reads, in one-letter code: 3-deoxy-manno-octulosonate cytidylyltransferase (253 aa).

It belongs to the KdsB family.

The protein localises to the cytoplasm. The enzyme catalyses 3-deoxy-alpha-D-manno-oct-2-ulosonate + CTP = CMP-3-deoxy-beta-D-manno-octulosonate + diphosphate. It participates in nucleotide-sugar biosynthesis; CMP-3-deoxy-D-manno-octulosonate biosynthesis; CMP-3-deoxy-D-manno-octulosonate from 3-deoxy-D-manno-octulosonate and CTP: step 1/1. Its pathway is bacterial outer membrane biogenesis; lipopolysaccharide biosynthesis. Functionally, activates KDO (a required 8-carbon sugar) for incorporation into bacterial lipopolysaccharide in Gram-negative bacteria. The chain is 3-deoxy-manno-octulosonate cytidylyltransferase from Neisseria meningitidis serogroup C (strain 053442).